The following is a 386-amino-acid chain: Putative 8-amino-7-oxononanoate synthase (386 aa).

Arg-22 contacts substrate. Position 109-110 (109-110) interacts with pyridoxal 5'-phosphate; the sequence is GY. His-134 contributes to the substrate binding site. Residues Ser-182, 207-210, and 238-241 each bind pyridoxal 5'-phosphate; these read DEAH and TLSK. N6-(pyridoxal phosphate)lysine is present on Lys-241. Thr-356 is a substrate binding site.

It belongs to the class-II pyridoxal-phosphate-dependent aminotransferase family. BioF subfamily. As to quaternary structure, homodimer. Pyridoxal 5'-phosphate is required as a cofactor.

It carries out the reaction 6-carboxyhexanoyl-[ACP] + L-alanine + H(+) = (8S)-8-amino-7-oxononanoate + holo-[ACP] + CO2. It participates in cofactor biosynthesis; biotin biosynthesis. Catalyzes the decarboxylative condensation of pimeloyl-[acyl-carrier protein] and L-alanine to produce 8-amino-7-oxononanoate (AON), [acyl-carrier protein], and carbon dioxide. The protein is Putative 8-amino-7-oxononanoate synthase (bioF) of Nostoc sp. (strain PCC 7120 / SAG 25.82 / UTEX 2576).